The following is a 792-amino-acid chain: Alpha-1,6-mannosylglycoprotein 6-beta-N-acetylglucosaminyltransferase B (792 aa).

Topologically, residues 1–24 (MITVNPDGKIMVRRCLVTLRPFRL) are cytoplasmic. The helical; Signal-anchor for type II membrane protein transmembrane segment at 25 to 45 (FVLGIGFFTLCFLMTSLGGQF) threads the bilayer. Residues 46–792 (SARRLGDSPF…GQVALCQGCL (747 aa)) lie on the Lumenal side of the membrane. N-linked (GlcNAc...) asparagine glycosylation occurs at asparagine 127. Cystine bridges form between cysteine 157-cysteine 195, cysteine 168-cysteine 208, cysteine 184-cysteine 353, and cysteine 387-cysteine 644. An N-linked (GlcNAc...) asparagine glycan is attached at asparagine 675. Intrachain disulfides connect cysteine 700/cysteine 775, cysteine 704/cysteine 777, cysteine 711/cysteine 764, cysteine 732/cysteine 753, and cysteine 788/cysteine 791.

The protein belongs to the glycosyltransferase 18 family. Mn(2+) is required as a cofactor. In terms of tissue distribution, present in brain (at protein level). Predominantly expressed in hippocampus, superficial layers of the brain cortex, striatum, nucleus accumbens, a subset of nuclei in the thalamus, inferior colliculus, brain stem and cerebellum.

The protein resides in the golgi apparatus membrane. It carries out the reaction N(4)-{beta-D-GlcNAc-(1-&gt;2)-[beta-D-GlcNAc-(1-&gt;4)]-alpha-D-Man-(1-&gt;3)-[beta-D-GlcNAc-(1-&gt;2)-alpha-D-Man-(1-&gt;6)]-beta-D-Man-(1-&gt;4)-beta-D-GlcNAc-(1-&gt;4)-beta-D-GlcNAc}-L-asparaginyl-[protein] + UDP-N-acetyl-alpha-D-glucosamine = N(4)-{beta-D-GlcNAc-(1-&gt;2)-[beta-D-GlcNAc-(1-&gt;4)]-alpha-D-Man-(1-&gt;3)-[beta-D-GlcNAc-(1-&gt;2)-[beta-D-GlcNAc-(1-&gt;6)]-alpha-D-Man-(1-&gt;6)]-beta-D-Man-(1-&gt;4)-beta-D-GlcNAc-(1-&gt;4)-beta-D-GlcNAc}-L-asparaginyl-[protein] + UDP + H(+). The catalysed reaction is 3-O-[N-acetyl-beta-D-glucosaminyl-(1-&gt;2)-alpha-D-mannosyl]-L-seryl-[protein] + UDP-N-acetyl-alpha-D-glucosamine = O(3)-{N-acetyl-beta-D-glucosaminyl-(1-&gt;2)-[N-acetyl-beta-D-glucosaminyl-(1-&gt;6)]-alpha-D-mannosyl}-L-seryl-[protein] + UDP + H(+). The enzyme catalyses 3-O-[N-acetyl-beta-D-glucosaminyl-(1-&gt;2)-alpha-D-mannosyl]-L-threonyl-[protein] + UDP-N-acetyl-alpha-D-glucosamine = O(3)-{N-acetyl-beta-D-glucosaminyl-(1-&gt;2)-[N-acetyl-beta-D-glucosaminyl-(1-&gt;6)]-alpha-D-mannosyl}-L-threonyl-[protein] + UDP + H(+). It functions in the pathway protein modification; protein glycosylation. Functionally, glycosyltransferase that acts on alpha-linked mannose of N-glycans and O-mannosyl glycans. Catalyzes the transfer of N-acetylglucosamine (GlcNAc) to the beta 1-6 linkage of the mannose residue of GlcNAc-beta1,2-Man-alpha on both the alpha1,3- and alpha1,6-linked mannose arms in the core structure of N-glycan. Also acts on the GlcNAc-beta1,2-Man-alpha1-Ser/Thr moiety, forming a 2,6-branched structure in brain O-mannosyl glycan. Plays an active role in modulating integrin and laminin-dependent adhesion and migration of neuronal cells via its activity in the O-mannosyl glycan pathway. This Mus musculus (Mouse) protein is Alpha-1,6-mannosylglycoprotein 6-beta-N-acetylglucosaminyltransferase B (Mgat5b).